The chain runs to 339 residues: Lymphocyte-specific protein 1 (339 aa).

The tract at residues 1-198 (MAEASSDPGA…SPPLSPTTKL (198 aa)) is disordered. A Phosphoserine modification is found at Ser-24. Basic and acidic residues-rich tracts occupy residues 32–43 (VHEQCQHERDRQ) and 51–61 (GGGHVPERPKQ). Ser-111 bears the Phosphoserine mark. Residues 117–140 (EDRPGLHAYEKEDSDEVHLEELSL) are compositionally biased toward basic and acidic residues. Thr-175 is modified (phosphothreonine). 4 positions are modified to phosphoserine: Ser-177, Ser-188, Ser-189, and Ser-193. A compositionally biased stretch (polar residues) spans 185–196 (IEQSSPPLSPTT). At Ser-252 the chain carries Phosphoserine; by MAPKAPK2. The segment at 294 to 315 (KSLWEQKGGSKTSSTIKSTPSG) is disordered. Positions 300 to 315 (KGGSKTSSTIKSTPSG) are enriched in low complexity. Lys-327 bears the N6-acetyllysine mark.

In terms of assembly, binds actin. In terms of processing, phosphorylated by casein kinase II, protein kinase C and MAPKAPK2. Phosphorylation by PKC induces translocation from membrane to cytoplasm. Phosphorylation by MAPKAPK2 may regulate neutrophil chemotaxis. In terms of tissue distribution, activated T-lymphocytes.

The protein localises to the cell membrane. May play a role in mediating neutrophil activation and chemotaxis. The protein is Lymphocyte-specific protein 1 (LSP1) of Homo sapiens (Human).